The chain runs to 674 residues: ATP-dependent DNA helicase Hel308 (674 aa).

ATP is bound by residues Q27 and 44 to 51 (VPTAAGKT). In terms of domain architecture, Helicase ATP-binding spans 31-197 (IEQFRKGKNI…WLNASLIKSS (167 aa)). The DEAH box signature appears at 142 to 145 (DEIH). Residues 224 to 411 (DINLLVKETV…PEKVRFNTLA (188 aa)) enclose the Helicase C-terminal domain.

The protein belongs to the helicase family. Hel308 subfamily. In terms of assembly, monomer.

It catalyses the reaction Couples ATP hydrolysis with the unwinding of duplex DNA by translocating in the 3'-5' direction.. It carries out the reaction ATP + H2O = ADP + phosphate + H(+). DNA-dependent ATPase and 3'-5' DNA helicase that may be involved in repair of stalled replication forks. The sequence is that of ATP-dependent DNA helicase Hel308 from Thermoplasma volcanium (strain ATCC 51530 / DSM 4299 / JCM 9571 / NBRC 15438 / GSS1).